An 827-amino-acid polypeptide reads, in one-letter code: Thymine dioxygenase JBP1 (827 aa).

Positions 62–264 (QIIGVVLREA…RLTCVFYYRA (203 aa)) are thymine dioxygenase. The Fe cation site is built by His-189, Asp-191, and His-239. 2-oxoglutarate is bound at residue Arg-255. 2 disordered regions span residues 364–383 (PLRG…PRPL) and 539–568 (PEEK…HEKR). The interval 392-561 (TNLMVSTAVE…IEEARRHGMP (170 aa)) is DNA-binding JBP1 domain. Positions 539-557 (PEEKKRRMERKQRIEEARR) are enriched in basic and acidic residues.

It belongs to the TET family. JBP1 subfamily. As to quaternary structure, monomer. Binds to DNA as a monomer. It depends on Fe(2+) as a cofactor.

The protein resides in the nucleus. It carries out the reaction thymine + 2-oxoglutarate + O2 = 5-hydroxymethyluracil + succinate + CO2. Its function is as follows. Dioxygenase that catalyzes the first step of DNA base J (beta-d-glucosyl-HOMedU) biosynthesis by converting thymine to 5-hydroxymethyluracil (HOMedU). DNA base J is a hypermodified thymidine residue found in the genome of kinetoplastid parasites, which is localized primarily to repetitive DNA, namely the telomeres, and is implicated in the regulation of antigenic variation. Also specifically binds to base J-containing DNA (J-DNA). Involved in propagation and maintenance of DNA base J synthesis initiated by JBP2 by specifically binding already synthesized DNA base J and propagating J synthesis. Thymine dioxygenase activity and J-DNA-binding are independent functions. This Leishmania tarentolae (Sauroleishmania tarentolae) protein is Thymine dioxygenase JBP1 (JBP1).